A 227-amino-acid chain; its full sequence is Urease accessory protein UreF (227 aa).

The protein belongs to the UreF family. UreD, UreF and UreG form a complex that acts as a GTP-hydrolysis-dependent molecular chaperone, activating the urease apoprotein by helping to assemble the nickel containing metallocenter of UreC. The UreE protein probably delivers the nickel.

The protein resides in the cytoplasm. Required for maturation of urease via the functional incorporation of the urease nickel metallocenter. This Shewanella halifaxensis (strain HAW-EB4) protein is Urease accessory protein UreF.